A 429-amino-acid polypeptide reads, in one-letter code: Trigger factor (429 aa).

The 86-residue stretch at glutamate 161–proline 246 folds into the PPIase FKBP-type domain.

This sequence belongs to the FKBP-type PPIase family. Tig subfamily. As to quaternary structure, homodimer and monomer. In vivo most of the ribosomes are in complex with monomeric TF. Uncomplexed TF, however, is in a monomer-dimer equilibrium with approximately two thirds of TF existing in a dimeric state.

Its subcellular location is the cytoplasm. It catalyses the reaction [protein]-peptidylproline (omega=180) = [protein]-peptidylproline (omega=0). Functionally, involved in protein export. Acts as a chaperone by maintaining the newly synthesized protein in an open conformation. Functions as a peptidyl-prolyl cis-trans isomerase. This chain is Trigger factor, found in Escherichia coli O45:K1 (strain S88 / ExPEC).